Here is a 135-residue protein sequence, read N- to C-terminus: Crossover junction endodeoxyribonuclease Hje (135 aa).

Mg(2+)-binding residues include Glu-10, Asp-39, and Glu-52.

The protein belongs to the Holliday junction resolvase Hjc family. Hje subfamily. In terms of assembly, homodimer. Requires Mg(2+) as cofactor.

It carries out the reaction Endonucleolytic cleavage at a junction such as a reciprocal single-stranded crossover between two homologous DNA duplexes (Holliday junction).. Its function is as follows. A structure-specific endonuclease that resolves Holliday junction (HJ) intermediates during genetic recombination. Acts only on 4-way DNA junctions in a sequence non-specific manner; introduces paired nicks in opposing strands 2 bases 3' of the point of strand exchange only on continuous strands of 4-way junction DNA. Cleaves both mobile and immobile junctions. Plays a more direct role in DNA repair than Hjc. Overexpression of this protein decreases the growth rate, and leads to genomic instability, and global transcriptomic changes. This Saccharolobus islandicus (strain REY15A) (Sulfolobus islandicus) protein is Crossover junction endodeoxyribonuclease Hje.